We begin with the raw amino-acid sequence, 526 residues long: Vang-like protein 2 (526 aa).

A disordered region spans residues 1–95; the sequence is MDNESQYSGY…NEDLTRASKE (95 aa). Residues 1-109 lie on the Cytoplasmic side of the membrane; sequence MDNESQYSGY…SPLECRRFAG (109 aa). A compositionally biased stretch (basic residues) spans 15 to 33; it reads SHSRSSRKHRDRRDRHRSK. Composition is skewed to basic and acidic residues over residues 34–43 and 58–68; these read SRDSSSRGDK and ESTRGDDRDDN. The segment covering 70–83 has biased composition (low complexity); it reads GETTTVVTGTSEHS. The span at 84–95 shows a compositional bias: basic and acidic residues; sequence VSNEDLTRASKE. Residues 110-130 traverse the membrane as a helical segment; the sequence is PIVSGVLGLFALLTPLAFLLL. Residues 131–148 lie on the Extracellular side of the membrane; it reads PQLLWRDSLEPCGTPCEG. The chain crosses the membrane as a helical span at residues 149-169; that stretch reads LYVSLAFKLLVLLISSWALFL. The Cytoplasmic portion of the chain corresponds to 170-178; the sequence is RPSRSTLPR. The helical transmembrane segment at 179-199 threads the bilayer; sequence FFVFRCLLMALVFLFVASYWL. The Extracellular segment spans residues 200 to 215; it reads FYGVRVLEPRERDYRG. Residues 216–236 traverse the membrane as a helical segment; sequence IVGYAVSLVDALLFIQYLALV. The Cytoplasmic segment spans residues 237-526; sequence LLEVRHLRPA…VMRLQSETSV (290 aa). The PDZ-binding signature appears at 523-526; the sequence is ETSV.

This sequence belongs to the Vang family. As to quaternary structure, interacts with the PDZ domain of dvl2/dsh. As to expression, ubiquitously expressed at the 4-cell stage. In early somitogenesis, becomes more abundant in anterior neural tissue where expression is seen in the neural tube but not in the notochord.

The protein resides in the cell membrane. Functionally, plays a role in non-canonical Wnt/planar cell polarity (PCP) signaling to regulate convergent extension cell movements during gastrulation. Acts together with scrib and prickle1 and localizes prickle1 and dvl2/dsh to the plasma membrane. Has an overlapping role with kny during both convergent extension and eye development. In the eye, involved in establishing proper alignment of the anterior neural plate and midline cells expressing shha and shhb/twhh. Has indirect effects on a number of other developmental processes including notochord shape formation, neural progenitor cell morphogenesis, segregation of somites and adaxial cell development. Together with prickle1, required for the posterior (caudal) movement of branchiomotor neurons in the hindbrain independently of, and a few hours after, convergent extension. May be required for cell surface localization of fzd3 and fzd6 in the inner ear. The polypeptide is Vang-like protein 2 (Danio rerio (Zebrafish)).